The sequence spans 2310 residues: Retinal-specific phospholipid-transporting ATPase ABCA4 (2310 aa).

At 1 to 21 (MGFLRQIQLLLWKNWTLRKRQ) the chain is on the cytoplasmic side. The chain crosses the membrane as a helical span at residues 22–42 (KIRFVVELVWPLSLFLVLIWL). The Extracellular portion of the chain corresponds to 43-646 (RNANPLYSQH…MPYPCFVDDS (604 aa)). 2 disulfide bridges follow: cysteine 54-cysteine 81 and cysteine 75-cysteine 324. A glycan (N-linked (GlcNAc...) asparagine) is linked at asparagine 98. Mg(2+) is bound by residues serine 336 and asparagine 338. A disulfide bridge connects residues cysteine 370 and cysteine 519. Residues asparagine 415 and asparagine 504 are each glycosylated (N-linked (GlcNAc...) asparagine). Residues arginine 587 and arginine 653 each coordinate an N-all-trans-retinylidenephosphatidylethanolamine. Cystine bridges form between cysteine 641–cysteine 1489, cysteine 1443–cysteine 1454, and cysteine 1487–cysteine 1501. The helical transmembrane segment at 647-667 (FMIILNRCFPIFMVLAWIYSV) threads the bilayer. The Cytoplasmic segment spans residues 668–699 (SMTVKGIVLEKELRLKETLKNQGVSNAVIWCT). A helical membrane pass occupies residues 700–720 (WFLDSFSIMALSIFLLTLFIM). Residues 721–730 (HGRILHYSDP) are Extracellular-facing. Residues 731 to 751 (FILFLFLLAFATATIMQSFLL) form a helical membrane-spanning segment. At 752–759 (STLFSKAS) the chain is on the cytoplasmic side. A helical transmembrane segment spans residues 760–780 (LAAACSGVIYFTLYLPHVLCF). The Extracellular portion of the chain corresponds to 781-835 (AWQDRMTADLKTTVSLLSSVAFGFGTEYLVRFEEQGLGLQWSNIGKSPLEGDEFS). The helical transmembrane segment at 836 to 856 (FLLSMKMMLLDAALYGLLAWY) threads the bilayer. Residues 857 to 1375 (LDQVFPGDYG…IRSRKDFVAQ (519 aa)) lie on the Cytoplasmic side of the membrane. The interval 891–910 (ERALEKTEPLTEEMEDPEHP) is disordered. Threonine 901 carries the phosphothreonine modification. The 232-residue stretch at 929-1160 (VCVKNLVKVF…FGTGFYLTLV (232 aa)) folds into the ABC transporter 1 domain. ATP is bound by residues phenylalanine 938, glycine 966, and lysine 969. Residue threonine 970 coordinates Mg(2+). ATP-binding residues include threonine 971, glutamine 1010, lysine 1054, glycine 1064, glycine 1065, and histidine 1118. Position 1185 is a phosphoserine (serine 1185). The tract at residues 1311–1344 (RQYAQAPHTCSPGQVDPPKGQPSPEPEDPGVPFN) is disordered. A helical membrane pass occupies residues 1376 to 1396 (IVLPATFVFLALMLSIIVPPF). The Extracellular portion of the chain corresponds to 1397–1726 (GEFPALTLHP…VSPTTYWLTN (330 aa)). An N-linked (GlcNAc...) asparagine glycan is attached at asparagine 1468. N-linked (GlcNAc...) asparagine glycosylation is found at asparagine 1528, asparagine 1587, and asparagine 1661. The helical transmembrane segment at 1727–1747 (FLWDIMNYAVSAGLVVGIFIG) threads the bilayer. The Cytoplasmic portion of the chain corresponds to 1748-1758 (FQKKAYTSPDN). A helical membrane pass occupies residues 1759 to 1779 (LPALVSLLMLYGWAVIPMMYP). The Extracellular portion of the chain corresponds to 1780-1791 (ASFLFEVPSTAY). Residues 1792–1812 (VALSCANLFIGINSSAITFVL) traverse the membrane as a helical segment. At 1813–1830 (ELFENNRTLLRFNAMLRK) the chain is on the cytoplasmic side. The chain crosses the membrane as a helical span at residues 1831 to 1851 (LLIVFPHFCLGRGLIDLALSQ). The Extracellular portion of the chain corresponds to 1852–1872 (AVTDVYAQFGEEYSANPFQWD). A helical membrane pass occupies residues 1873–1893 (LIGKNLVAMAIEGVVYFLLTL). The Cytoplasmic portion of the chain corresponds to 1894 to 2310 (LIQHHFFLTR…AEDKHTRSPQ (417 aa)). Positions 1937–2169 (LKLNELTKVY…FGDGYIVTMK (233 aa)) constitute an ABC transporter 2 domain. Positions 1973, 1974, 1977, 1978, 1979, and 2072 each coordinate ATP. Threonine 1978 serves as a coordination point for Mg(2+). Residues 2243-2248 (VFVNFA) form an essential for ATP binding and ATPase activity region. The tract at residues 2266-2310 (ASWQAKLEEKSGRLQTQEPLPAGSEQLANGSNPTAAEDKHTRSPQ) is disordered. Basic and acidic residues predominate over residues 2301 to 2310 (AEDKHTRSPQ).

It belongs to the ABC transporter superfamily. ABCA family. Post-translationally, N-glycosylated. Proteolytic cleavage by trypsin leads to a 120-kDa N-terminal fragment and a 115-kDa C-terminal fragment that are linked through disulfide bonds. In terms of processing, phosphorylation is independent of light exposure and modulates ATPase activity. In terms of tissue distribution, retinal-specific. Seems to be exclusively found in the rims of rod photoreceptor cells.

It is found in the membrane. Its subcellular location is the endoplasmic reticulum. It localises to the cell projection. The protein resides in the cilium. The protein localises to the photoreceptor outer segment. The enzyme catalyses an N-all-trans-retinylidenephosphatidylethanolamine(out) + ATP + H2O = an N-all-trans-retinylidenephosphatidylethanolamine(in) + ADP + phosphate + H(+). The catalysed reaction is ATP + H2O + phospholipidSide 1 = ADP + phosphate + phospholipidSide 2.. It carries out the reaction a 1,2-diacyl-sn-glycero-3-phosphoethanolamine(out) + ATP + H2O = a 1,2-diacyl-sn-glycero-3-phosphoethanolamine(in) + ADP + phosphate + H(+). It catalyses the reaction N-11-cis-retinylidenephosphatidylethanolamine(out) + ATP + H2O = N-11-cis-retinylidenephosphatidylethanolamine(in) + ADP + phosphate + H(+). The enzyme catalyses ATP + H2O = ADP + phosphate + H(+). With respect to regulation, ATPase activity is decreased by cholesterol and ceramide. Phospholipids translocase activity is highly reduced by berylium fluoride and aluminum floride. N-ethylmaleimide inhibits phospholipid translocase activity. Flippase that catalyzes in an ATP-dependent manner the transport of retinal-phosphatidylethanolamine conjugates like the 11-cis and all-trans isomers of N-retinylidene-phosphatidylethanolamine from the lumen to the cytoplasmic leaflet of photoreceptor outer segment disk membranes, where N-cis-retinylidene-phosphatidylethanolamine (N-cis-R-PE) is then isomerized to its all-trans isomer (N-trans-R-PE) and reduced by RDH8 to produce all-trans-retinol (all-trans-rol) and therefore prevents the accumulation of excess of 11-cis-retinal and its schiff-base conjugate and the formation of toxic bisretinoid. Displays ATPase activity in vitro in absence of retinal substrate. May display GTPase activity that is strongly influenced by the lipid environment and the presence of retinoid compounds. Binds the unprotonated form of N-retinylidene-phosphatidylethanolamine with high affinity in the absence of ATP and ATP binding and hydrolysis induce a protein conformational change that causes the dissociation of N-retinylidene-phosphatidylethanolamine. This chain is Retinal-specific phospholipid-transporting ATPase ABCA4, found in Mus musculus (Mouse).